Here is a 185-residue protein sequence, read N- to C-terminus: Tetratricopeptide repeat protein 36 homolog (185 aa).

TPR repeat units follow at residues 53–86 (SREL…AQRA), 88–119 (VLNN…ANDQ), and 125–158 (CHAH…GSKF).

The protein belongs to the TTC36 family.

The protein is Tetratricopeptide repeat protein 36 homolog of Drosophila melanogaster (Fruit fly).